A 50-amino-acid chain; its full sequence is Defensin D2 (50 aa).

Disulfide bonds link Cys3-Cys50, Cys14-Cys35, Cys20-Cys44, and Cys24-Cys46.

In terms of processing, contains 4 disulfide bonds.

Its subcellular location is the secreted. Antimicrobial peptide active against fungi, Gram-positive and Gram-negative bacteria. Inhibits growth of hyphae in the fungi A.niger (IC(50)=3.5 ug/ml), B.sorokiniana (IC(50)=1.8 ug/ml), F.oxysporum (IC(50)=5.3 ug/ml), F.graminearum (IC(50)=6.9 ug/ml), F.culmorum (IC(50)=6.9 ug/ml) and B.cinerea (IC(50)=13.7 ug/ml). Has no effect on spore germination. Destroys spores in germinated conidia by disruption of cell walls and membranes in A.niger and B.sorokiniana. Causes vacuolization of germinated macro- and microconidia in F.oxysporum, F.graminearum and F.culmorum. Strongly inhibits growth of P.infestans on potato tubers above concentrations of 3.4 ug/ml. Inhibits growth of Gram-positive bacteria C.michiganensis and B.subtilis and of Gram-negative bacteria P.syringae, E.carotovora and E.coli. The sequence is that of Defensin D2 from Nigella sativa (Black cumin).